A 126-amino-acid polypeptide reads, in one-letter code: C-type natriuretic peptide (126 aa).

An N-terminal signal peptide occupies residues 1 to 23; it reads MHLSQLLACALLLTLLSLRPSEA. A disordered region spans residues 20-71; it reads PSEAKPGAPPKVPRTPPAEELAEPQAAGGGQKKGDKAPGGGGANLKGDRSRL. A propeptide spanning residues 24 to 73 is cleaved from the precursor; it reads KPGAPPKVPRTPPAEELAEPQAAGGGQKKGDKAPGGGGANLKGDRSRLLR. Positions 26-35 are enriched in pro residues; that stretch reads GAPPKVPRTP. Residues 46–63 are compositionally biased toward gly residues; sequence AGGGQKKGDKAPGGGGAN. Cysteine 110 and cysteine 126 are disulfide-bonded.

It belongs to the natriuretic peptide family. In terms of processing, degraded by IDE (in vitro). In terms of tissue distribution, in the kidney, predominantly expressed in the distal tubular cells (at protein level).

The protein localises to the secreted. Hormone which plays a role in endochondral ossification through regulation of cartilaginous growth plate chondrocytes proliferation and differentiation. May also be vasoactive and natriuretic. Acts by specifically binding and stimulating NPR2 to produce cGMP. Binds the clearance receptor NPR3. This Homo sapiens (Human) protein is C-type natriuretic peptide (NPPC).